Consider the following 424-residue polypeptide: Protein CLP1 homolog (424 aa).

Residues E19, K60, and 122–127 (DVGKST) each bind ATP.

It belongs to the Clp1 family. Clp1 subfamily.

It localises to the nucleus. In terms of biological role, required for endonucleolytic cleavage during polyadenylation-dependent pre-mRNA 3'-end formation. The sequence is that of Protein CLP1 homolog (cbc) from Aedes aegypti (Yellowfever mosquito).